Reading from the N-terminus, the 263-residue chain is MSPPLELDYIGLSPPPPPPSSSSAAAARADDVDLKGTELRLGLPGSESPDRRPAAIAAAAATATTLELLPAKGAKRVFPDEAALTPPTAAAGKGKAAREGEEVGAEEEDKKVAAPPQPAAKAQVVGWPPIRSYRKNTMATNQIKSNKEDVDAKQGQGFLYVKVSMDGAPYLRKVDLKTYKNYKDMSLGLEKMFIGFSTGKEGAENQKDGEYVLTYEDKDGDWMLVGDVPWEMFTDSCRRLRIMKGSDAIGLAPRAGEKSKNRN.

Disordered regions lie at residues 1 to 54 (MSPP…RRPA) and 76 to 121 (RVFP…PAAK). A compositionally biased stretch (basic and acidic residues) spans 28 to 38 (RADDVDLKGTE). An EAR-like (transcriptional repression) motif is present at residues 39–43 (LRLGL). One can recognise a PB1 domain in the interval 158–245 (FLYVKVSMDG…SCRRLRIMKG (88 aa)).

The protein belongs to the Aux/IAA family. As to quaternary structure, homodimers and heterodimers. In terms of tissue distribution, highly expressed in flowers. Expressed in roots and shoots.

Its subcellular location is the nucleus. Functionally, aux/IAA proteins are short-lived transcriptional factors that function as repressors of early auxin response genes at low auxin concentrations. This Oryza sativa subsp. japonica (Rice) protein is Auxin-responsive protein IAA3 (IAA3).